The primary structure comprises 335 residues: Aliphatic sulfonates import ATP-binding protein SsuB (335 aa).

An ABC transporter domain is found at 74–293 (VRLTRVSKRY…ARASAAFAAL (220 aa)). An ATP-binding site is contributed by 106 to 113 (GRSGCGKS). The segment at 308 to 335 (APAAPNAAGPEGASRGRAAPASGLRWAV) is disordered.

Belongs to the ABC transporter superfamily. Aliphatic sulfonates importer (TC 3.A.1.17.2) family. The complex is composed of two ATP-binding proteins (SsuB), two transmembrane proteins (SsuC) and a solute-binding protein (SsuA).

The protein localises to the cell inner membrane. It carries out the reaction ATP + H2O + aliphatic sulfonate-[sulfonate-binding protein]Side 1 = ADP + phosphate + aliphatic sulfonateSide 2 + [sulfonate-binding protein]Side 1.. Part of the ABC transporter complex SsuABC involved in aliphatic sulfonates import. Responsible for energy coupling to the transport system. This chain is Aliphatic sulfonates import ATP-binding protein SsuB, found in Burkholderia mallei (strain ATCC 23344).